The primary structure comprises 559 residues: Membrane protein insertase YidC (559 aa).

A helical transmembrane segment spans residues 7-24; that stretch reads ILWVIFSMSLVLLYDNWQ. 2 stretches are compositionally biased toward low complexity: residues 45 to 55 and 63 to 82; these read APAASGAAAQG and QPATGTSAAPAAGAAPQAAA. A disordered region spans residues 45-82; sequence APAASGAAAQGDVPKANVQPATGTSAAPAAGAAPQAAA. Helical transmembrane passes span 338 to 358, 364 to 384, 434 to 454, 472 to 492, and 507 to 527; these read LELVKDYGWLTILAKPLFWLL, FLGNWGWSIIALTVLIKLVFF, LGGCLPIVIQIPVFIALYWVL, LSVPDPFYILPIVMAVSMFVQ, and VMMIMPLVFSVMFFFFPAGLV.

This sequence belongs to the OXA1/ALB3/YidC family. Type 1 subfamily. In terms of assembly, interacts with the Sec translocase complex via SecD. Specifically interacts with transmembrane segments of nascent integral membrane proteins during membrane integration.

The protein localises to the cell inner membrane. Functionally, required for the insertion and/or proper folding and/or complex formation of integral membrane proteins into the membrane. Involved in integration of membrane proteins that insert both dependently and independently of the Sec translocase complex, as well as at least some lipoproteins. Aids folding of multispanning membrane proteins. The chain is Membrane protein insertase YidC from Cupriavidus taiwanensis (strain DSM 17343 / BCRC 17206 / CCUG 44338 / CIP 107171 / LMG 19424 / R1) (Ralstonia taiwanensis (strain LMG 19424)).